The chain runs to 735 residues: Protein RETICULATA-RELATED 5, chloroplastic (735 aa).

The transit peptide at 1 to 75 (MKPTTNGGLL…TRRAILVAPP (75 aa)) directs the protein to the chloroplast. A run of 2 helical transmembrane segments spans residues 519–539 (ASVV…FISY) and 582–602 (VIIG…AAVG). The span at 714 to 726 (ASQSTVEYSTTEE) shows a compositional bias: polar residues. Residues 714 to 735 (ASQSTVEYSTTEEASMDDLKNQ) are disordered.

Belongs to the RETICULATA family.

The protein resides in the plastid. It is found in the chloroplast membrane. Its function is as follows. May play a role in leaf development. The chain is Protein RETICULATA-RELATED 5, chloroplastic from Arabidopsis thaliana (Mouse-ear cress).